The primary structure comprises 322 residues: Cytochrome f (322 aa).

Positions 1 to 35 are cleaved as a signal peptide; it reads MQTRNTFSWTWIREEITRSISVSLMIYIITWSSIS. Heme-binding residues include Tyr-38, Cys-58, Cys-61, and His-62. A helical transmembrane segment spans residues 288 to 308; that stretch reads VQGLLFFLGSVVLAQIFLVLK.

The protein belongs to the cytochrome f family. The 4 large subunits of the cytochrome b6-f complex are cytochrome b6, subunit IV (17 kDa polypeptide, petD), cytochrome f and the Rieske protein, while the 4 small subunits are PetG, PetL, PetM and PetN. The complex functions as a dimer. Heme serves as cofactor.

The protein localises to the plastid. It is found in the chloroplast thylakoid membrane. In terms of biological role, component of the cytochrome b6-f complex, which mediates electron transfer between photosystem II (PSII) and photosystem I (PSI), cyclic electron flow around PSI, and state transitions. This is Cytochrome f from Aethionema grandiflorum (Persian stone-cress).